Reading from the N-terminus, the 427-residue chain is Adenylosuccinate synthetase (427 aa).

Residues 12-18 and 40-42 contribute to the GTP site; these read GDEGKGK and GHT. Catalysis depends on aspartate 13, which acts as the Proton acceptor. Positions 13 and 40 each coordinate Mg(2+). IMP contacts are provided by residues 13 to 16, 38 to 41, threonine 126, arginine 140, glutamine 221, threonine 236, and arginine 299; these read DEGK and NAGH. Residue histidine 41 is the Proton donor of the active site. 295-301 is a binding site for substrate; it reads STTKRPR. Residues arginine 301, 327–329, and 409–411 contribute to the GTP site; these read KLD and SVG.

Belongs to the adenylosuccinate synthetase family. As to quaternary structure, homodimer. Mg(2+) is required as a cofactor.

Its subcellular location is the cytoplasm. It catalyses the reaction IMP + L-aspartate + GTP = N(6)-(1,2-dicarboxyethyl)-AMP + GDP + phosphate + 2 H(+). The protein operates within purine metabolism; AMP biosynthesis via de novo pathway; AMP from IMP: step 1/2. In terms of biological role, plays an important role in the de novo pathway of purine nucleotide biosynthesis. Catalyzes the first committed step in the biosynthesis of AMP from IMP. The polypeptide is Adenylosuccinate synthetase (Borrelia duttonii (strain Ly)).